The chain runs to 321 residues: tRNA U34 carboxymethyltransferase (321 aa).

Carboxy-S-adenosyl-L-methionine contacts are provided by residues Lys-90, Trp-104, Lys-109, Gly-129, 151–153 (DPT), 180–181 (IE), Met-195, Tyr-199, and Arg-314.

Belongs to the class I-like SAM-binding methyltransferase superfamily. CmoB family. Homotetramer.

It catalyses the reaction carboxy-S-adenosyl-L-methionine + 5-hydroxyuridine(34) in tRNA = 5-carboxymethoxyuridine(34) in tRNA + S-adenosyl-L-homocysteine + H(+). Functionally, catalyzes carboxymethyl transfer from carboxy-S-adenosyl-L-methionine (Cx-SAM) to 5-hydroxyuridine (ho5U) to form 5-carboxymethoxyuridine (cmo5U) at position 34 in tRNAs. In Haemophilus influenzae (strain ATCC 51907 / DSM 11121 / KW20 / Rd), this protein is tRNA U34 carboxymethyltransferase.